A 310-amino-acid chain; its full sequence is MRTHDDTWDIRTSVGATAVMVAAARAVETSKPEPLIRDPYARMLVTNANAGVIWEAMLDQEMVAKVEAIDAETAATVEHMRSYQAVRTNFFDTYFADAVAAGIRQVVILASGLDSRAYRLDWPAGTTVYEIDQPQVLAYKSATLAENGVTPAAERREVAIDLRQDWPSALRAAGFDPSARTAWLAEGLLMYLPAEAQDRLFTQIGELSCAGSRIAAETAGNHADERREQMRERFRKVAQTLGLEQTIDVHELIYHDPDRALLGQWLNEHGWRANAQNACDEMHRVGRWVEGVPMADDKQAYSEFVTAERL.

S-adenosyl-L-methionine-binding positions include Asp132 and Asp161–Leu162.

It belongs to the UPF0677 family.

Exhibits S-adenosyl-L-methionine-dependent methyltransferase activity. The polypeptide is Putative S-adenosyl-L-methionine-dependent methyltransferase MMAR_0357 (Mycobacterium marinum (strain ATCC BAA-535 / M)).